A 21-amino-acid chain; its full sequence is Venom peptide Tv1 (21 aa).

3 cysteine pairs are disulfide-bonded: Cys-4-Cys-20, Cys-5-Cys-21, and Cys-7-Cys-16.

In terms of tissue distribution, expressed by the salivary gland. This peptide is considered as a venom peptide.

It localises to the secreted. Injections of 20 uM of this synthetic peptide (Ile) causes partial paralysis to polychaete worms (Nereis virens), the natural prey of terebrid snails. This paralysis may be due to an inhibition of nicotinic receptors at the neuromuscular junction. This chain is Venom peptide Tv1, found in Terebra variegata (Variegate auger snail).